The following is a 298-amino-acid chain: uncharacterized protein (298 aa).

This is an uncharacterized protein from Methanocaldococcus jannaschii (strain ATCC 43067 / DSM 2661 / JAL-1 / JCM 10045 / NBRC 100440) (Methanococcus jannaschii).